We begin with the raw amino-acid sequence, 154 residues long: Transcriptional repressor NrdR (154 aa).

A zinc finger spans residues 3–34 (CPFCRHPDSRVIDSRETDEGQAIRRRRSCPEC). The region spanning 46 to 136 (LAVVKRSGVT…VYRSFESADD (91 aa)) is the ATP-cone domain.

It belongs to the NrdR family. Zn(2+) is required as a cofactor.

Its function is as follows. Negatively regulates transcription of bacterial ribonucleotide reductase nrd genes and operons by binding to NrdR-boxes. The polypeptide is Transcriptional repressor NrdR (Mycobacterium avium (strain 104)).